Consider the following 280-residue polypeptide: Acyl-[acyl-carrier-protein]--UDP-N-acetylglucosamine O-acyltransferase (280 aa).

It belongs to the transferase hexapeptide repeat family. LpxA subfamily. In terms of assembly, homotrimer.

The protein localises to the cytoplasm. The enzyme catalyses a (3R)-hydroxyacyl-[ACP] + UDP-N-acetyl-alpha-D-glucosamine = a UDP-3-O-[(3R)-3-hydroxyacyl]-N-acetyl-alpha-D-glucosamine + holo-[ACP]. It participates in glycolipid biosynthesis; lipid IV(A) biosynthesis; lipid IV(A) from (3R)-3-hydroxytetradecanoyl-[acyl-carrier-protein] and UDP-N-acetyl-alpha-D-glucosamine: step 1/6. Its function is as follows. Involved in the biosynthesis of lipid A, a phosphorylated glycolipid that anchors the lipopolysaccharide to the outer membrane of the cell. The sequence is that of Acyl-[acyl-carrier-protein]--UDP-N-acetylglucosamine O-acyltransferase from Chlamydia muridarum (strain MoPn / Nigg).